Consider the following 157-residue polypeptide: SsrA-binding protein (157 aa).

A disordered region spans residues 133–157 (LHDKRETEKKRDWSREKGRLLRARG). Residues 135–151 (DKRETEKKRDWSREKGR) show a composition bias toward basic and acidic residues.

It belongs to the SmpB family.

The protein resides in the cytoplasm. Its function is as follows. Required for rescue of stalled ribosomes mediated by trans-translation. Binds to transfer-messenger RNA (tmRNA), required for stable association of tmRNA with ribosomes. tmRNA and SmpB together mimic tRNA shape, replacing the anticodon stem-loop with SmpB. tmRNA is encoded by the ssrA gene; the 2 termini fold to resemble tRNA(Ala) and it encodes a 'tag peptide', a short internal open reading frame. During trans-translation Ala-aminoacylated tmRNA acts like a tRNA, entering the A-site of stalled ribosomes, displacing the stalled mRNA. The ribosome then switches to translate the ORF on the tmRNA; the nascent peptide is terminated with the 'tag peptide' encoded by the tmRNA and targeted for degradation. The ribosome is freed to recommence translation, which seems to be the essential function of trans-translation. In Bradyrhizobium diazoefficiens (strain JCM 10833 / BCRC 13528 / IAM 13628 / NBRC 14792 / USDA 110), this protein is SsrA-binding protein.